The following is a 388-amino-acid chain: 1-deoxy-D-xylulose 5-phosphate reductoisomerase (388 aa).

Threonine 15, glycine 16, serine 17, isoleucine 18, and asparagine 127 together coordinate NADPH. Lysine 128 is a 1-deoxy-D-xylulose 5-phosphate binding site. Glutamate 129 is a binding site for NADPH. Mn(2+) is bound at residue aspartate 153. The 1-deoxy-D-xylulose 5-phosphate site is built by serine 154, glutamate 155, serine 179, and histidine 202. Mn(2+) is bound at residue glutamate 155. Residue glycine 208 coordinates NADPH. 4 residues coordinate 1-deoxy-D-xylulose 5-phosphate: serine 215, asparagine 220, lysine 221, and glutamate 224. Mn(2+) is bound at residue glutamate 224.

Belongs to the DXR family. Mg(2+) serves as cofactor. Requires Mn(2+) as cofactor.

The enzyme catalyses 2-C-methyl-D-erythritol 4-phosphate + NADP(+) = 1-deoxy-D-xylulose 5-phosphate + NADPH + H(+). It participates in isoprenoid biosynthesis; isopentenyl diphosphate biosynthesis via DXP pathway; isopentenyl diphosphate from 1-deoxy-D-xylulose 5-phosphate: step 1/6. Its function is as follows. Catalyzes the NADPH-dependent rearrangement and reduction of 1-deoxy-D-xylulose-5-phosphate (DXP) to 2-C-methyl-D-erythritol 4-phosphate (MEP). This chain is 1-deoxy-D-xylulose 5-phosphate reductoisomerase, found in Bacteroides fragilis (strain YCH46).